Reading from the N-terminus, the 430-residue chain is Serine--tRNA ligase (430 aa).

237–239 (TAE) provides a ligand contact to L-serine. Position 268–270 (268–270 (RSE)) interacts with ATP. E291 serves as a coordination point for L-serine. Residue 355–358 (EISS) coordinates ATP. S391 provides a ligand contact to L-serine.

The protein belongs to the class-II aminoacyl-tRNA synthetase family. Type-1 seryl-tRNA synthetase subfamily. In terms of assembly, homodimer. The tRNA molecule binds across the dimer.

The protein localises to the cytoplasm. The enzyme catalyses tRNA(Ser) + L-serine + ATP = L-seryl-tRNA(Ser) + AMP + diphosphate + H(+). The catalysed reaction is tRNA(Sec) + L-serine + ATP = L-seryl-tRNA(Sec) + AMP + diphosphate + H(+). The protein operates within aminoacyl-tRNA biosynthesis; selenocysteinyl-tRNA(Sec) biosynthesis; L-seryl-tRNA(Sec) from L-serine and tRNA(Sec): step 1/1. In terms of biological role, catalyzes the attachment of serine to tRNA(Ser). Is also able to aminoacylate tRNA(Sec) with serine, to form the misacylated tRNA L-seryl-tRNA(Sec), which will be further converted into selenocysteinyl-tRNA(Sec). The protein is Serine--tRNA ligase of Citrobacter koseri (strain ATCC BAA-895 / CDC 4225-83 / SGSC4696).